A 365-amino-acid polypeptide reads, in one-letter code: Glycerol dehydrogenase (365 aa).

Residues Asp37, Gly94, Lys95, Thr116, and Ser119 each coordinate NAD(+). Asp121 lines the glycerol pocket. NAD(+) is bound by residues Ser125, Leu127, and Tyr131. Asp171, His254, and His271 together coordinate Zn(2+). His254 provides a ligand contact to glycerol.

Belongs to the iron-containing alcohol dehydrogenase family. The cofactor is Zn(2+).

It catalyses the reaction glycerol + NAD(+) = dihydroxyacetone + NADH + H(+). Its pathway is polyol metabolism; glycerol fermentation; glycerone phosphate from glycerol (oxidative route): step 1/2. Catalyzes the NAD-dependent oxidation of glycerol to dihydroxyacetone (glycerone). Allows microorganisms to utilize glycerol as a source of carbon under anaerobic conditions. The chain is Glycerol dehydrogenase (gldA) from Pseudomonas putida (Arthrobacter siderocapsulatus).